We begin with the raw amino-acid sequence, 326 residues long: E3 ubiquitin-protein ligase SINAT3 (326 aa).

The segment at 1 to 44 (MDLDSMDCTSTMDVTDDEEIHQDRHSYASVSKHHHTNNNTTNVN) is disordered. The segment at 63–99 (CPVCTNSMYPPIHQCHNGHTLCSTCKARVHNRCPTCR) adopts an RING-type zinc-finger fold. The tract at residues 113 to 306 (VAESLELPCK…KELKLRVTGR (194 aa)) is SBD. The SIAH-type zinc-finger motif lies at 116–176 (SLELPCKHMS…LVAHLRDDHK (61 aa)). Residues C121, C128, H140, C144, C151, C158, H170, and H175 each contribute to the Zn(2+) site.

Belongs to the SINA (Seven in absentia) family. As to quaternary structure, interacts with SINAT6. Interacts with WAV3. Interacts with FREE1. Interacts with ELC/VPS23A.

The protein localises to the endosome. It localises to the multivesicular body. Its subcellular location is the cytoplasmic vesicle. It is found in the autophagosome. The catalysed reaction is S-ubiquitinyl-[E2 ubiquitin-conjugating enzyme]-L-cysteine + [acceptor protein]-L-lysine = [E2 ubiquitin-conjugating enzyme]-L-cysteine + N(6)-ubiquitinyl-[acceptor protein]-L-lysine.. It functions in the pathway protein modification; protein ubiquitination. Its function is as follows. E3 ubiquitin-protein ligase that mediates ubiquitination and subsequent proteasomal degradation of target proteins. E3 ubiquitin ligases accept ubiquitin from an E2 ubiquitin-conjugating enzyme in the form of a thioester and then directly transfers the ubiquitin to targeted substrates. It probably triggers the ubiquitin-mediated degradation of different substrates. Modulates directly the ubiquitination and proteasomal-dependent degradation of FREE1, a component of the ESCRT-I complex. Modulates directly the ubiquitination and proteasomal-dependent degradation of ELC/VPS23A, a component of the ESCRT-I complex. The polypeptide is E3 ubiquitin-protein ligase SINAT3 (Arabidopsis thaliana (Mouse-ear cress)).